The chain runs to 247 residues: Submandibular gland secretory Glx-rich protein CB (247 aa).

The first 18 residues, 1–18 (MLVVLLTAALLALSSAQG), serve as a signal peptide directing secretion. Residues 14-219 (SSAQGTDEEV…PQHYRGRPPK (206 aa)) are disordered. 7 stretches are compositionally biased toward low complexity: residues 39-50 (PVDSGSDPPSAD), 58-71 (EGESAPPANEEPPA), 81-93 (QQEPTQAENQEPP), 104-116 (QQEPTQAENQEPP), 126-139 (QQQQPTQAENQEPP), 150-159 (QQESTQAENQ), and 178-196 (VESPPSSPENSQEQPQQTN). 5 tandem repeats follow at residues 67–89 (EEPPATSGSEEEQQQQEPTQAEN), 90–112 (QEPPATSGSEEEQQQQEPTQAEN), 113–135 (QEPPATSGSEEEQQQQQPTQAEN), 136–158 (QEPPATSGSEEEQQQQESTQAEN), and 159–181 (QEPSDSAGEGQETQPEEGNVESP). A 5 X 23 AA tandem repeats region spans residues 67–181 (EEPPATSGSE…QPEEGNVESP (115 aa)). Basic and acidic residues predominate over residues 197 to 212 (PEEKPPAPKTQEEPQH).

As to expression, submandibular gland acinar cells.

It localises to the secreted. GRP proteins have a marked affinity for hydroxyapatite. They may play a role in the formation of the protective acquired pellicle at the saliva-tooth interface. The polypeptide is Submandibular gland secretory Glx-rich protein CB (Grpcb) (Rattus norvegicus (Rat)).